Consider the following 75-residue polypeptide: Stewaprin-a (75 aa).

The first 24 residues, 1 to 24, serve as a signal peptide directing secretion; sequence MSSGGLLLLLGLLTLWAELIPVSG. Positions 27–72 constitute a WAP domain; the sequence is HPKKPGLCPPRPQKPPCVRECKNDWSCPGEQKCCRYGCIFECRDPI. Intrachain disulfides connect cysteine 34/cysteine 60, cysteine 43/cysteine 64, cysteine 47/cysteine 59, and cysteine 53/cysteine 68.

The protein belongs to the venom waprin family. In terms of tissue distribution, expressed by the venom gland.

It localises to the secreted. Its function is as follows. Damages membranes of susceptible bacteria. Has no hemolytic activity. Not toxic to mice. Does not inhibit the proteinases elastase and cathepsin G. The sequence is that of Stewaprin-a from Hoplocephalus stephensii (Stephens's banded snake).